The chain runs to 341 residues: GDP-fucose transporter 1 (341 aa).

The next 10 helical transmembrane spans lie at 17-37 (LVIGYALCSSLLAVINKLAIT), 41-61 (YPGLLTALQYLTCTVAVYLLG), 71-91 (FTWDTAKKFLPAAIVFYLAIF), 103-123 (DTFIVFRSLTPLLVAIADTVF), 132-152 (LTFLSLVVILAGAVGYVATDS), 156-176 (LTAYSWALAYLVTITTEMVYI), 187-207 (IWGLVLYNNLLSLMIAPVFWF), 231-251 (AFSSVAASCVFGFLISYFGFA), 260-280 (AFTVTGVVNKFLTVVINVLIW), and 283-303 (HATPVGLVCLLFTICGGVGYQ). The disordered stretch occupies residues 316–341 (SEKDSEKGEEDEELTQLVPGKLASVV).

It belongs to the nucleotide-sugar transporter family. GDP-Mannose:GMP antiporter (GMA) (TC 2.A.7.13) subfamily. Ubiquitous.

Its subcellular location is the golgi apparatus membrane. Its function is as follows. Acts as the major nucleotide-sugar transporter for the import of GDP-Fucose into the Golgi lumen. Transports GDP-Fucose in a strict counter-exchange mode. Is required for proper plant growth and development. Also acts as a GDP-mannose transporter that may be involved in the import of GDP-mannose from the cytoplasm into the Golgi lumen. The sequence is that of GDP-fucose transporter 1 from Arabidopsis thaliana (Mouse-ear cress).